Reading from the N-terminus, the 347-residue chain is Probable dual-specificity RNA methyltransferase RlmN (347 aa).

The active-site Proton acceptor is the glutamate 91. In terms of domain architecture, Radical SAM core spans 97–327 (YKYGNSICVS…ATVRREMGSD (231 aa)). Cysteine 104 and cysteine 332 are disulfide-bonded. [4Fe-4S] cluster contacts are provided by cysteine 111, cysteine 115, and cysteine 118. S-adenosyl-L-methionine-binding positions include 158–159 (GE), serine 190, 213–215 (SLH), and asparagine 289. Cysteine 332 acts as the S-methylcysteine intermediate in catalysis.

It belongs to the radical SAM superfamily. RlmN family. [4Fe-4S] cluster serves as cofactor.

The protein resides in the cytoplasm. It catalyses the reaction adenosine(2503) in 23S rRNA + 2 reduced [2Fe-2S]-[ferredoxin] + 2 S-adenosyl-L-methionine = 2-methyladenosine(2503) in 23S rRNA + 5'-deoxyadenosine + L-methionine + 2 oxidized [2Fe-2S]-[ferredoxin] + S-adenosyl-L-homocysteine. The enzyme catalyses adenosine(37) in tRNA + 2 reduced [2Fe-2S]-[ferredoxin] + 2 S-adenosyl-L-methionine = 2-methyladenosine(37) in tRNA + 5'-deoxyadenosine + L-methionine + 2 oxidized [2Fe-2S]-[ferredoxin] + S-adenosyl-L-homocysteine. Specifically methylates position 2 of adenine 2503 in 23S rRNA and position 2 of adenine 37 in tRNAs. This is Probable dual-specificity RNA methyltransferase RlmN from Clostridium perfringens (strain SM101 / Type A).